Here is a 75-residue protein sequence, read N- to C-terminus: MSCSYEFIVDVNVCSTTYNRRYFHKFQLHSLVNTNVNVNKKYAYPSAGVDIVAVATTLPFIVAVICIVFDEVNVF.

A helical transmembrane segment spans residues 49–69; the sequence is VDIVAVATTLPFIVAVICIVF.

Its subcellular location is the host membrane. This is an uncharacterized protein from Saccharolobus islandicus (Sulfolobus islandicus).